A 325-amino-acid polypeptide reads, in one-letter code: uncharacterized protein (325 aa).

This is an uncharacterized protein from Escherichia coli (Bacteriophage T4).